Reading from the N-terminus, the 408-residue chain is 3-ketoacyl-CoA thiolase A, peroxisomal (408 aa).

Cys112 acts as the Acyl-thioester intermediate in catalysis. Catalysis depends on proton acceptor residues His366 and Cys394.

It belongs to the thiolase-like superfamily. Thiolase family. In terms of assembly, homodimer.

The protein resides in the peroxisome. It carries out the reaction an acyl-CoA + acetyl-CoA = a 3-oxoacyl-CoA + CoA. Its pathway is lipid metabolism; fatty acid metabolism. The protein is 3-ketoacyl-CoA thiolase A, peroxisomal of Candida tropicalis (Yeast).